The following is a 325-amino-acid chain: Neisseria adhesin A (325 aa).

The signal sequence occupies residues 1 to 23; sequence MKHFQSKVLTAAILAALSGSAMA. Residues 24–137 form a head domain region; the sequence is DNPPPSTDEI…NTAAIGENKA (114 aa). Residues 86–135 are a coiled coil; the sequence is LKEVLAQHDQSLADLTGTVDENSEALVKTAEVVNDISADVKANTAAIGEN. The segment at 139–231 is coiled stalk domain; that stretch reads IAKKADQTAL…LASAEKSITE (93 aa). Residues 232 to 270 form an outer membrane translocation of the passenger domain region; the sequence is HGTRLNGLDRTVSDLRKETRQGLAEQAALSGLFQPYNVG. 4 beta stranded membrane-spanning segments follow: residues 270 to 280, 284 to 295, 302 to 308, and 314 to 325; these read GRFNVTAAVGG, ESAVAIGTGFRF, KAGVAVG, and SAAYHVGVNYEW. Residues 271 to 325 form a translocator domain region; sequence RFNVTAAVGGYKSESAVAIGTGFRFTENFAAKAGVAVGTSSGSSAAYHVGVNYEW.

Belongs to the autotransporter-2 (AT-2) (TC 1.B.40) family. Homotrimer.

The protein localises to the cell surface. Its subcellular location is the cell outer membrane. In terms of biological role, an antigenic bacterial cell surface protein that adheres to and induces bacterial uptake by human epithelial cells. The sequence is that of Neisseria adhesin A from Neisseria meningitidis serogroup B.